A 122-amino-acid polypeptide reads, in one-letter code: Ribosome-binding factor A (122 aa).

This sequence belongs to the RbfA family. Monomer. Binds 30S ribosomal subunits, but not 50S ribosomal subunits or 70S ribosomes.

The protein resides in the cytoplasm. One of several proteins that assist in the late maturation steps of the functional core of the 30S ribosomal subunit. Associates with free 30S ribosomal subunits (but not with 30S subunits that are part of 70S ribosomes or polysomes). Required for efficient processing of 16S rRNA. May interact with the 5'-terminal helix region of 16S rRNA. This chain is Ribosome-binding factor A, found in Polaromonas sp. (strain JS666 / ATCC BAA-500).